Consider the following 316-residue polypeptide: Beta-ketoacyl-[acyl-carrier-protein] synthase III 1 (316 aa).

Catalysis depends on residues Cys-112 and His-243. The segment at 244-248 is ACP-binding; sequence QANYR. The active site involves Asn-273.

Belongs to the thiolase-like superfamily. FabH family. Homodimer.

It localises to the cytoplasm. The catalysed reaction is malonyl-[ACP] + acetyl-CoA + H(+) = 3-oxobutanoyl-[ACP] + CO2 + CoA. The protein operates within lipid metabolism; fatty acid biosynthesis. Catalyzes the condensation reaction of fatty acid synthesis by the addition to an acyl acceptor of two carbons from malonyl-ACP. Catalyzes the first condensation reaction which initiates fatty acid synthesis and may therefore play a role in governing the total rate of fatty acid production. Possesses both acetoacetyl-ACP synthase and acetyl transacylase activities. Its substrate specificity determines the biosynthesis of branched-chain and/or straight-chain of fatty acids. The polypeptide is Beta-ketoacyl-[acyl-carrier-protein] synthase III 1 (Vibrio cholerae serotype O1 (strain ATCC 39315 / El Tor Inaba N16961)).